The sequence spans 197 residues: Imidazoleglycerol-phosphate dehydratase (197 aa).

It belongs to the imidazoleglycerol-phosphate dehydratase family.

The protein localises to the cytoplasm. The enzyme catalyses D-erythro-1-(imidazol-4-yl)glycerol 3-phosphate = 3-(imidazol-4-yl)-2-oxopropyl phosphate + H2O. The protein operates within amino-acid biosynthesis; L-histidine biosynthesis; L-histidine from 5-phospho-alpha-D-ribose 1-diphosphate: step 6/9. This chain is Imidazoleglycerol-phosphate dehydratase, found in Bradyrhizobium diazoefficiens (strain JCM 10833 / BCRC 13528 / IAM 13628 / NBRC 14792 / USDA 110).